The sequence spans 483 residues: Probable glycosyltransferase 6 (483 aa).

Topologically, residues 1 to 40 (MAASETAPFGVSAASKGGGGVAGARAQHGQLAVAGRVHDA) are cytoplasmic. The helical; Signal-anchor for type II membrane protein transmembrane segment at 41–61 (LVFAAGAVAAVLVLLATASFL) threads the bilayer. At 62–483 (SPMPVTNLVA…PLPFDYPAAR (422 aa)) the chain is on the lumenal side. A glycan (N-linked (GlcNAc...) asparagine) is linked at Asn144.

This sequence belongs to the glycosyltransferase 34 family.

The protein localises to the golgi apparatus membrane. Probable glycosyltransferase that may be involved in the biosynthesis of xyloglucan. The chain is Probable glycosyltransferase 6 from Oryza sativa subsp. japonica (Rice).